A 434-amino-acid polypeptide reads, in one-letter code: MSAETAAANTATAPVPEVQEQESSKSKQVNLTPAPLPTSSPWKLAPTEIPVSTISIEDLDATRKKKNRTPTPKSSTATKWVPIKASITVSGTKRSGSKNGASNGNSNKSKNNKTAASSTSSSNANRKKKHHQHNAKKQQQMKKDGFESAVGEEDSKDATSQENGQSTQQQQPPHHRNHHHSHHHNSNGPQRRKFHNSNNAGMPQNQGFPPQFKPYQGRNARNNNNNRSKYHNHFHHNQQHPQQPMVKLQQQFYPVQPVLMAINNIARQIEYYFSEENLTVDNYLRSKLSKDGFAPLSLISKFYRVVNMSFGGDTNLILAALREIVANEAATVNVAEGTLAAKEGDNVTGEAKEPSPLDKYFVRSKSWSNWLPETFETEINIEKELVGDALDQFMISLPPVPQQEEESSTELASQEQETKEDSAPVAAGESESSL.

The span at Met1 to Ala13 shows a compositional bias: low complexity. The segment at Met1 to Gln243 is disordered. A compositionally biased stretch (polar residues) spans Ser26–Pro41. Ser55 carries the post-translational modification Phosphoserine. The segment covering Lys93–Ala124 has biased composition (low complexity). Basic residues predominate over residues Asn125–Gln140. The residue at position 148 (Ser148) is a Phosphoserine. Lys156 participates in a covalent cross-link: Glycyl lysine isopeptide (Lys-Gly) (interchain with G-Cter in ubiquitin). Over residues Ala158–Thr167 the composition is skewed to polar residues. Residues Pro173–His195 are compositionally biased toward basic residues. Residues Asn196 to Phe208 are compositionally biased toward polar residues. A compositionally biased stretch (low complexity) spans Arg218–Arg227. Basic residues predominate over residues Ser228–Gln238. In terms of domain architecture, HTH La-type RNA-binding spans Val255–Ala351. Glycyl lysine isopeptide (Lys-Gly) (interchain with G-Cter in ubiquitin) cross-links involve residues Lys301, Lys342, and Lys352. Positions Ser396 to Leu434 are disordered. Phosphoserine is present on Ser422.

Interacts with HAP1. Component of the HMC including HAP1, SRO9 and YDJ1.

Its subcellular location is the cytoplasm. In terms of biological role, may overlap in function with tropomyosin and may be involved in organization of actin filaments. Acts as a multicopy suppressor of RHO3 mutation. RNA-binding protein which may modulate mRNA translation. Involved in heme regulation of HAP1, as a component of the high-molecular-weight complex (HMC). The protein is RNA-binding protein SRO9 (SRO9) of Saccharomyces cerevisiae (strain ATCC 204508 / S288c) (Baker's yeast).